A 502-amino-acid polypeptide reads, in one-letter code: MEKFQGYLEFDGARQQSFLYPLFFREYIYVLSYDHGLNRLNRNRSIFLENADYDKKYSSLIVKRLILRMYEQNRLIIPTKDLNTNLGHTNLFYYQMISVLFAVIVEIPFSLRLGSSFEGKNLKKSYNLQSIHSIFPFLEDKFSHFNYVLDVLIPYPIHLEILVQTLRYRVKDASSLHFFRFCLYEYCNWKNFDSKKKSILNPRFFLFLYNSHVCEYESIFFFLRKQSSHLRSTSYEVFFERILFYGKIQHFLKVFVNNFPAILGLLKDPFLHYVRYHGKYILATKDTPLMMNKWKYYFVNLWQCYFSVWFQSQKININQLSKDNFEFLGYFSSLRLNSLVVRSQMLENSFLIDNVRRKLDSNIQISSIIGSLAKDKFCNVLGHPISKATWMDSSDSDILNRFVRICRNISHYYSGSAKKKNLYRIKYILRLCCVKTLARKHKSTVRAFLKRLGSGLLEEFLTGEDQVLSLIFPRSDYASKRLYRVRVWYLDILYLNDLVNHE.

The protein belongs to the intron maturase 2 family. MatK subfamily.

Its subcellular location is the plastid. The protein resides in the chloroplast. Usually encoded in the trnK tRNA gene intron. Probably assists in splicing its own and other chloroplast group II introns. Binds its homologous trnK precursor transcript. In Sinapis alba (White mustard), this protein is Maturase K.